The chain runs to 156 residues: tRNA (cytidine(34)-2'-O)-methyltransferase (156 aa).

S-adenosyl-L-methionine is bound by residues glycine 102, leucine 124, and serine 132.

Belongs to the class IV-like SAM-binding methyltransferase superfamily. RNA methyltransferase TrmH family. TrmL subfamily. As to quaternary structure, homodimer.

The protein localises to the cytoplasm. The catalysed reaction is cytidine(34) in tRNA + S-adenosyl-L-methionine = 2'-O-methylcytidine(34) in tRNA + S-adenosyl-L-homocysteine + H(+). It carries out the reaction 5-carboxymethylaminomethyluridine(34) in tRNA(Leu) + S-adenosyl-L-methionine = 5-carboxymethylaminomethyl-2'-O-methyluridine(34) in tRNA(Leu) + S-adenosyl-L-homocysteine + H(+). Its function is as follows. Methylates the ribose at the nucleotide 34 wobble position in the two leucyl isoacceptors tRNA(Leu)(CmAA) and tRNA(Leu)(cmnm5UmAA). Catalyzes the methyl transfer from S-adenosyl-L-methionine to the 2'-OH of the wobble nucleotide. This chain is tRNA (cytidine(34)-2'-O)-methyltransferase, found in Burkholderia ambifaria (strain ATCC BAA-244 / DSM 16087 / CCUG 44356 / LMG 19182 / AMMD) (Burkholderia cepacia (strain AMMD)).